A 121-amino-acid polypeptide reads, in one-letter code: Basic phospholipase A2 BmjeTX-II (121 aa).

Intrachain disulfides connect C26/C114, C28/C45, C44/C95, C50/C121, C51/C88, C58/C82, and C76/C86. Y27, G29, and G31 together coordinate Ca(2+). Residue H48 is part of the active site. D49 contributes to the Ca(2+) binding site. The active site involves D89.

It depends on Ca(2+) as a cofactor. In terms of tissue distribution, expressed by the venom gland.

The protein localises to the secreted. It carries out the reaction a 1,2-diacyl-sn-glycero-3-phosphocholine + H2O = a 1-acyl-sn-glycero-3-phosphocholine + a fatty acid + H(+). Functionally, snake venom phospholipase A2 (PLA2) that induces blockade of neuromuscular contraction in an indirectly stimulated chick biventer cervicis nerve-muscle preparation. Does not inhibit contraction of chick biventer cervicic nerve-muscle preparation in response to treatment with acetylcholine or KCl. The neuromuscular blockade is mediated by inhibitory action at the presynaptic motor nerve endings. Lyses skeletal myoblasts and myotubes in vitro, and intramuscular injection causes local muscle necrosis. Induces edema in the mouse foot pad. Induces a transient increase of IL-6 levels. PLA2 catalyzes the calcium-dependent hydrolysis of the 2-acyl groups in 3-sn-phosphoglycerides. The polypeptide is Basic phospholipase A2 BmjeTX-II (Bothrops marajoensis (Marajo lancehead)).